Here is a 36-residue protein sequence, read N- to C-terminus: Glucagon-2 (36 aa).

This sequence belongs to the glucagon family.

Its subcellular location is the secreted. Its function is as follows. Glucagon plays a key role in glucose metabolism and homeostasis. Regulates blood glucose by increasing gluconeogenesis and decreasing glycolysis. The chain is Glucagon-2 from Huso dauricus (Kaluga sturgeon).